The following is a 198-amino-acid chain: Non-structural protein 5 (198 aa).

Over residues 17–30 (IFKNESSSTTSTLS) the composition is skewed to low complexity. Disordered stretches follow at residues 17–36 (IFKN…SIGR) and 53–73 (LSKS…PLTS). Over residues 64-73 (DSASNDPLTS) the composition is skewed to polar residues. The residue at position 67 (S67) is a Phosphoserine; by host CK1. D92 contributes to the Mg(2+) binding site. The segment at 129–167 (STDQKREKSKKDHKNGKHYPKIEAESDSDDYVLDDSDSD) is disordered. Positions 153–166 (ESDSDDYVLDDSDS) are enriched in acidic residues. Residues S154, S156, S164, and S166 each carry the phosphoserine; by host modification.

It belongs to the rotavirus NSP5 family. Homodimer. Interacts with VP1. Interacts with VP2. Interacts with NSP2; this interaction leads to up-regulation of NSP5 hyperphosphorylation and formation of virus factories. Interacts with NSP6. Participates in the selective exclusion of host proteins from stress granules (SG) and P bodies (PB). Also participates in the sequestration of these remodeled organelles in viral factories. The cofactor is Mg(2+). Post-translationally, O-glycosylated. In terms of processing, hyperphosphorylated on serine residues, when in dimeric form. Phosphorylation by host CK1 is required for the hyperphosphorylation of NSP5 dimer.

It localises to the host cytoplasm. In terms of biological role, plays an essential role in the viral genome replication. Participates, together with NSP2, in the formation of viral factories (viroplasms), which are large inclusions in the host cytoplasm where replication intermediates are assembled and viral RNA replication takes place. Orchestrates the recruitment of viroplasmic proteins such as capsid proteins to these factories. Participates in the selective exclusion of host proteins from stress granules (SG) and P bodies (PB). Also participates in the sequestration of these remodeled organelles in viral factories. This Rotavirus A (isolate RVA/Human/Belgium/B4106/2000/G3P11[14]) (RV-A) protein is Non-structural protein 5.